Reading from the N-terminus, the 419-residue chain is L-rhamnose isomerase (419 aa).

The Mn(2+) site is built by H262, D294, and D296.

This sequence belongs to the rhamnose isomerase family. Homotetramer. The cofactor is Mn(2+).

Its subcellular location is the cytoplasm. The enzyme catalyses L-rhamnopyranose = L-rhamnulose. It functions in the pathway carbohydrate degradation; L-rhamnose degradation; glycerone phosphate from L-rhamnose: step 1/3. Catalyzes the interconversion of L-rhamnose and L-rhamnulose. The sequence is that of L-rhamnose isomerase from Escherichia coli O157:H7.